A 319-amino-acid chain; its full sequence is Olfactory receptor 56B4 (319 aa).

Over 1-31 the chain is Extracellular; the sequence is MDTSTSVTYDSSLQISQFILMGLPGIHEWQH. Residues 32 to 52 form a helical membrane-spanning segment; sequence WLSLPLTLLYLLALGANLLII. Topologically, residues 53-60 are cytoplasmic; sequence ITIQHETV. Residues 61–81 form a helical membrane-spanning segment; that stretch reads LHEPMYHLLGILAVVDIGLAT. The Extracellular portion of the chain corresponds to 82 to 105; the sequence is TIMPKILAIFWFDAKAISLPMCFA. The cysteines at positions 103 and 195 are disulfide-linked. A helical transmembrane segment spans residues 106 to 126; that stretch reads QIYAIHCFFCIESGIFLCMAV. Topologically, residues 127 to 145 are cytoplasmic; the sequence is DRYIAICRPLQYPSIVTKA. A helical transmembrane segment spans residues 146-166; sequence FVFKATGFIMLRNGLLTIPVP. Topologically, residues 167–202 are extracellular; sequence ILAAQRHYCSRNEIEHCLCSNLGVISLACDDITVNK. A helical membrane pass occupies residues 203–223; it reads FYQLMLAWVLVGSDMALVFSS. Residues 224-243 lie on the Cytoplasmic side of the membrane; sequence YAVILHSVLRLNSAEAMSKA. Residues 244–263 traverse the membrane as a helical segment; it reads LSTCSSHLILILFHTGIIVL. Residues 264–277 are Extracellular-facing; that stretch reads SVTHLAEKKIPLIP. The helical transmembrane segment at 278–298 threads the bilayer; that stretch reads VFLNVLHNVIPPALNPLACAL. Residues 299–319 lie on the Cytoplasmic side of the membrane; the sequence is RMHKLRLGFQRLLGLGQDVSK.

The protein belongs to the G-protein coupled receptor 1 family.

Its subcellular location is the cell membrane. Its function is as follows. Odorant receptor. This is Olfactory receptor 56B4 (OR56B4) from Homo sapiens (Human).